Here is a 182-residue protein sequence, read N- to C-terminus: Transmembrane and coiled-coil domain-containing protein 2 (182 aa).

Transmembrane regions (helical) follow at residues 10 to 30 (IIIDYLSLSSIWNYLQATLLG) and 50 to 70 (VQVILGISFLILLGVGMYALW). A coiled-coil region spans residues 122-149 (GLQEKILKKLQTVENKVKDLEGMIISQK).

It is found in the membrane. The sequence is that of Transmembrane and coiled-coil domain-containing protein 2 (TMCO2) from Bos taurus (Bovine).